The following is a 246-amino-acid chain: ATP synthase subunit a (246 aa).

Positions 1–3 (MFY) are cleaved as a propeptide — removed in mature form. The next 7 helical transmembrane spans lie at 20–40 (ILTL…SIIF), 56–76 (WGVA…SQIG), 82–102 (FFPL…ISMI), 112–132 (LVAI…LGLY), 138–158 (FFAL…LVLI), 176–196 (ANIL…VNLM), and 203–223 (FIGG…EVGI).

This sequence belongs to the ATPase A chain family. In terms of assembly, F-type ATPases have 2 components, CF(1) - the catalytic core - and CF(0) - the membrane proton channel. CF(1) has five subunits: alpha(3), beta(3), gamma(1), delta(1), epsilon(1). CF(0) has three main subunits: a, b and c.

The protein localises to the mitochondrion inner membrane. Its function is as follows. Mitochondrial membrane ATP synthase (F(1)F(0) ATP synthase or Complex V) produces ATP from ADP in the presence of a proton gradient across the membrane which is generated by electron transport complexes of the respiratory chain. F-type ATPases consist of two structural domains, F(1) - containing the extramembraneous catalytic core and F(0) - containing the membrane proton channel, linked together by a central stalk and a peripheral stalk. During catalysis, ATP synthesis in the catalytic domain of F(1) is coupled via a rotary mechanism of the central stalk subunits to proton translocation. Key component of the proton channel; it may play a direct role in the translocation of protons across the membrane. The polypeptide is ATP synthase subunit a (ATP6) (Candida albicans (strain SC5314 / ATCC MYA-2876) (Yeast)).